We begin with the raw amino-acid sequence, 540 residues long: Chaperonin GroEL (540 aa).

ATP contacts are provided by residues 29–32, 86–90, glycine 413, 476–478, and aspartate 492; these read TIGP, DGTTT, and NAA.

This sequence belongs to the chaperonin (HSP60) family. Forms a cylinder of 14 subunits composed of two heptameric rings stacked back-to-back. Interacts with the co-chaperonin GroES.

It is found in the cytoplasm. It carries out the reaction ATP + H2O + a folded polypeptide = ADP + phosphate + an unfolded polypeptide.. In terms of biological role, together with its co-chaperonin GroES, plays an essential role in assisting protein folding. The GroEL-GroES system forms a nano-cage that allows encapsulation of the non-native substrate proteins and provides a physical environment optimized to promote and accelerate protein folding. This chain is Chaperonin GroEL, found in Staphylococcus saprophyticus subsp. saprophyticus (strain ATCC 15305 / DSM 20229 / NCIMB 8711 / NCTC 7292 / S-41).